The chain runs to 263 residues: SPRY domain-containing SOCS box protein 2 (263 aa).

Residues 1-16 (MGQTALAGGSSSTPTP) show a composition bias toward polar residues. Residues 1 to 48 (MGQTALAGGSSSTPTPQALYPDLSCPEGLEELLSAPPPDLGAQRRHGW) are disordered. In terms of domain architecture, B30.2/SPRY spans 26-221 (PEGLEELLSA…VRIRYLGERR (196 aa)). The SOCS box domain maps to 222 to 263 (AEPHSLLHLSRLCVRHNLGDTRLGQVSALPLPPAMKRYLLYQ).

Belongs to the SPSB family. Component of the probable ECS(SPSB2) E3 ubiquitin-protein ligase complex which contains CUL5, RNF7/RBX2, Elongin BC complex and SPSB2. Interacts with CUL5, RNF7, ELOB and ELOC. Interacts with MET. Interacts (via B30.2/SPRY domain) with PAWR; this interaction occurs in association with the Elongin BC complex. Interacts with NOS2. As to quaternary structure, (Microbial infection) Interacts (via C-terminus) with HCV envelope glycoprotein E1. Interacts (via C-terminus) with HCV non-structural protein 5A; this interaction targets NS5A for ubiquitination and degradation.

The protein resides in the cytoplasm. Its subcellular location is the cytosol. It participates in protein modification; protein ubiquitination. Functionally, substrate recognition component of a SCF-like ECS (Elongin BC-CUL2/5-SOCS-box protein) E3 ubiquitin-protein ligase complex which mediates the ubiquitination and subsequent proteasomal degradation of target proteins. Negatively regulates nitric oxide (NO) production and limits cellular toxicity in activated macrophages by mediating the ubiquitination and proteasomal degradation of NOS2. Acts as a bridge which links NOS2 with the ECS E3 ubiquitin ligase complex components ELOC and CUL5. The protein is SPRY domain-containing SOCS box protein 2 (SPSB2) of Homo sapiens (Human).